The sequence spans 296 residues: Aldo-keto reductase MYCFIDRAFT_156381 (296 aa).

D14 provides a ligand contact to NADP(+). The Proton donor role is filled by Y19. Substrate is bound at residue H83. NADP(+) contacts are provided by residues 113–114 (CN), Q139, 168–178 (SPLAGGMLTDR), and R191. Substrate is bound at residue Y201. NADP(+) is bound at residue 255–263 (SSAEQLESN).

Belongs to the aldo/keto reductase family. Aldo/keto reductase 2 subfamily.

The protein operates within secondary metabolite biosynthesis. Its function is as follows. Aldo-keto reductase; part of the gene cluster that mediates the biosynthesis of an emodin derivative that may be involved in black Sigatoka disease of banana. The pathway begins with the synthesis of atrochrysone thioester by the polyketide synthase PKS8-1. The atrochrysone carboxyl ACP thioesterase MYCFIDRAFT_190111 then breaks the thioester bond and releases the atrochrysone carboxylic acid from PKS8-1. The decarboxylase MYCFIDRAFT_34057 then catalyzes the concerted decarboxylation-elimination required to convert atochrysone carboxylic acid into emodin anthrone, which is further oxidized to emodin by the anthrone oxygenase MYCFIDRAFT_34418. The functions of the other tailoring enzymes as well as the final product of the cluster have still to be identified. This chain is Aldo-keto reductase MYCFIDRAFT_156381, found in Pseudocercospora fijiensis (strain CIRAD86) (Black leaf streak disease fungus).